Consider the following 49-residue polypeptide: Large ribosomal subunit protein bL33 (49 aa).

This sequence belongs to the bacterial ribosomal protein bL33 family.

This chain is Large ribosomal subunit protein bL33, found in Pelotomaculum thermopropionicum (strain DSM 13744 / JCM 10971 / SI).